We begin with the raw amino-acid sequence, 476 residues long: Aspartyl/glutamyl-tRNA(Asn/Gln) amidotransferase subunit B (476 aa).

The protein belongs to the GatB/GatE family. GatB subfamily. In terms of assembly, heterotrimer of A, B and C subunits.

It catalyses the reaction L-glutamyl-tRNA(Gln) + L-glutamine + ATP + H2O = L-glutaminyl-tRNA(Gln) + L-glutamate + ADP + phosphate + H(+). The catalysed reaction is L-aspartyl-tRNA(Asn) + L-glutamine + ATP + H2O = L-asparaginyl-tRNA(Asn) + L-glutamate + ADP + phosphate + 2 H(+). In terms of biological role, allows the formation of correctly charged Asn-tRNA(Asn) or Gln-tRNA(Gln) through the transamidation of misacylated Asp-tRNA(Asn) or Glu-tRNA(Gln) in organisms which lack either or both of asparaginyl-tRNA or glutaminyl-tRNA synthetases. The reaction takes place in the presence of glutamine and ATP through an activated phospho-Asp-tRNA(Asn) or phospho-Glu-tRNA(Gln). The polypeptide is Aspartyl/glutamyl-tRNA(Asn/Gln) amidotransferase subunit B (Bacillus licheniformis (strain ATCC 14580 / DSM 13 / JCM 2505 / CCUG 7422 / NBRC 12200 / NCIMB 9375 / NCTC 10341 / NRRL NRS-1264 / Gibson 46)).